A 206-amino-acid chain; its full sequence is Dephospho-CoA kinase (206 aa).

The region spanning 4-200 (TVALTGGIGS…ASYLKLASQF (197 aa)) is the DPCK domain. 12-17 (GSGKST) contacts ATP.

The protein belongs to the CoaE family.

The protein resides in the cytoplasm. The enzyme catalyses 3'-dephospho-CoA + ATP = ADP + CoA + H(+). The protein operates within cofactor biosynthesis; coenzyme A biosynthesis; CoA from (R)-pantothenate: step 5/5. Catalyzes the phosphorylation of the 3'-hydroxyl group of dephosphocoenzyme A to form coenzyme A. This chain is Dephospho-CoA kinase, found in Salmonella typhimurium (strain LT2 / SGSC1412 / ATCC 700720).